Here is a 204-residue protein sequence, read N- to C-terminus: MSKVVVLNDKLEKAGELDLPSKYAEVNPHNLYLYVKSYLASLRANTAHTKGRSDVSGGGKKPWRQKGRGGARAGSTRTNVWVGGAVAFGPTNERNYFQKVNKKQKRLALERALADKAAKGALFTADSLAIESGKTKDANAVIKKLGVKDALIVKDLLDEKTLLAYRNLANCYVVDVTEVNAYLVSVFNAVIIEKSALESITKEG.

Positions 49 to 75 (TKGRSDVSGGGKKPWRQKGRGGARAGS) are disordered.

The protein belongs to the universal ribosomal protein uL4 family. Part of the 50S ribosomal subunit.

Functionally, one of the primary rRNA binding proteins, this protein initially binds near the 5'-end of the 23S rRNA. It is important during the early stages of 50S assembly. It makes multiple contacts with different domains of the 23S rRNA in the assembled 50S subunit and ribosome. Its function is as follows. Forms part of the polypeptide exit tunnel. This is Large ribosomal subunit protein uL4 from Campylobacter jejuni subsp. jejuni serotype O:23/36 (strain 81-176).